An 81-amino-acid chain; its full sequence is MSSGGLLLLLGLLTLWAELTPVSGRPGLCELPAETGPCKARIRAFYYNPHSHKCLEFTYGGCKGNANNFKTIDECNRTCVG.

The first 24 residues, 1-24 (MSSGGLLLLLGLLTLWAELTPVSG), serve as a signal peptide directing secretion. The BPTI/Kunitz inhibitor domain maps to 29-79 (CELPAETGPCKARIRAFYYNPHSHKCLEFTYGGCKGNANNFKTIDECNRTC). Intrachain disulfides connect Cys29/Cys79, Cys38/Cys62, and Cys54/Cys75.

As to expression, expressed by the venom gland.

The protein localises to the secreted. Functionally, snake venom serine protease inhibitor. The chain is Protease inhibitor 1 from Walterinnesia aegyptia (Desert black snake).